A 78-amino-acid chain; its full sequence is Large ribosomal subunit protein bL28 (78 aa).

It belongs to the bacterial ribosomal protein bL28 family.

The protein is Large ribosomal subunit protein bL28 of Azoarcus sp. (strain BH72).